The primary structure comprises 172 residues: Cytochrome c oxidase subunit 4 isoform 2, mitochondrial (172 aa).

The transit peptide at 1-18 directs the protein to the mitochondrion; the sequence is MFSRATRSLVMKTGGLRT. The segment at 1–33 is disordered; the sequence is MFSRATRSLVMKTGGLRTQGTHSPGSAASSSQR. Polar residues predominate over residues 16–33; it reads LRTQGTHSPGSAASSSQR. Residues 19–101 are Mitochondrial matrix-facing; the sequence is QGTHSPGSAA…TFAEMNHRSN (83 aa). Residues 102–127 traverse the membrane as a helical segment; it reads EWKTVMGCVFFFIGFTALVIWWQRVY. The Mitochondrial intermembrane portion of the chain corresponds to 128–172; the sequence is VFPKKVVTLTEERKAQQLQRLLDMKSNPIQGLSAHWDYEKKEWKK.

This sequence belongs to the cytochrome c oxidase IV family. In terms of assembly, component of the cytochrome c oxidase (complex IV, CIV), a multisubunit enzyme composed of 14 subunits. The complex is composed of a catalytic core of 3 subunits MT-CO1, MT-CO2 and MT-CO3, encoded in the mitochondrial DNA, and 11 supernumerary subunits COX4I, COX5A, COX5B, COX6A, COX6B, COX6C, COX7A, COX7B, COX7C, COX8 and NDUFA4, which are encoded in the nuclear genome. The complex exists as a monomer or a dimer and forms supercomplexes (SCs) in the inner mitochondrial membrane with NADH-ubiquinone oxidoreductase (complex I, CI) and ubiquinol-cytochrome c oxidoreductase (cytochrome b-c1 complex, complex III, CIII), resulting in different assemblies (supercomplex SCI(1)III(2)IV(1) and megacomplex MCI(2)III(2)IV(2)). Highly expressed in lung.

The protein localises to the mitochondrion inner membrane. It functions in the pathway energy metabolism; oxidative phosphorylation. Component of the cytochrome c oxidase, the last enzyme in the mitochondrial electron transport chain which drives oxidative phosphorylation. The respiratory chain contains 3 multisubunit complexes succinate dehydrogenase (complex II, CII), ubiquinol-cytochrome c oxidoreductase (cytochrome b-c1 complex, complex III, CIII) and cytochrome c oxidase (complex IV, CIV), that cooperate to transfer electrons derived from NADH and succinate to molecular oxygen, creating an electrochemical gradient over the inner membrane that drives transmembrane transport and the ATP synthase. Cytochrome c oxidase is the component of the respiratory chain that catalyzes the reduction of oxygen to water. Electrons originating from reduced cytochrome c in the intermembrane space (IMS) are transferred via the dinuclear copper A center (CU(A)) of subunit 2 and heme A of subunit 1 to the active site in subunit 1, a binuclear center (BNC) formed by heme A3 and copper B (CU(B)). The BNC reduces molecular oxygen to 2 water molecules using 4 electrons from cytochrome c in the IMS and 4 protons from the mitochondrial matrix. The chain is Cytochrome c oxidase subunit 4 isoform 2, mitochondrial (Cox4i2) from Rattus norvegicus (Rat).